Consider the following 494-residue polypeptide: Aspartyl/glutamyl-tRNA(Asn/Gln) amidotransferase subunit B (494 aa).

It belongs to the GatB/GatE family. GatB subfamily. As to quaternary structure, heterotrimer of A, B and C subunits.

It catalyses the reaction L-glutamyl-tRNA(Gln) + L-glutamine + ATP + H2O = L-glutaminyl-tRNA(Gln) + L-glutamate + ADP + phosphate + H(+). The enzyme catalyses L-aspartyl-tRNA(Asn) + L-glutamine + ATP + H2O = L-asparaginyl-tRNA(Asn) + L-glutamate + ADP + phosphate + 2 H(+). Functionally, allows the formation of correctly charged Asn-tRNA(Asn) or Gln-tRNA(Gln) through the transamidation of misacylated Asp-tRNA(Asn) or Glu-tRNA(Gln) in organisms which lack either or both of asparaginyl-tRNA or glutaminyl-tRNA synthetases. The reaction takes place in the presence of glutamine and ATP through an activated phospho-Asp-tRNA(Asn) or phospho-Glu-tRNA(Gln). The sequence is that of Aspartyl/glutamyl-tRNA(Asn/Gln) amidotransferase subunit B from Synechococcus sp. (strain WH7803).